Consider the following 156-residue polypeptide: ATP synthase subunit b (156 aa).

A helical transmembrane segment spans residues 7–29 (LIGQMGTFLVFWWFVNKVIWPMF).

It belongs to the ATPase B chain family. As to quaternary structure, F-type ATPases have 2 components, F(1) - the catalytic core - and F(0) - the membrane proton channel. F(1) has five subunits: alpha(3), beta(3), gamma(1), delta(1), epsilon(1). F(0) has three main subunits: a(1), b(2) and c(10-14). The alpha and beta chains form an alternating ring which encloses part of the gamma chain. F(1) is attached to F(0) by a central stalk formed by the gamma and epsilon chains, while a peripheral stalk is formed by the delta and b chains.

The protein localises to the cell inner membrane. Its function is as follows. F(1)F(0) ATP synthase produces ATP from ADP in the presence of a proton or sodium gradient. F-type ATPases consist of two structural domains, F(1) containing the extramembraneous catalytic core and F(0) containing the membrane proton channel, linked together by a central stalk and a peripheral stalk. During catalysis, ATP synthesis in the catalytic domain of F(1) is coupled via a rotary mechanism of the central stalk subunits to proton translocation. Component of the F(0) channel, it forms part of the peripheral stalk, linking F(1) to F(0). This Dichelobacter nodosus (strain VCS1703A) protein is ATP synthase subunit b.